The following is a 427-amino-acid chain: ATP-dependent RNA helicase DDX39A (427 aa).

Acidic residues predominate over residues 1 to 19; sequence MAEQDVENELLDYDEDEEP. The interval 1–35 is disordered; that stretch reads MAEQDVENELLDYDEDEEPQVPQESTPAPPKKDVK. Ala2 carries the N-acetylalanine modification. A Glycyl lysine isopeptide (Lys-Gly) (interchain with G-Cter in SUMO2) cross-link involves residue Lys31. Residue Lys35 is modified to N6-acetyllysine; alternate. Residue Lys35 forms a Glycyl lysine isopeptide (Lys-Gly) (interchain with G-Cter in SUMO2); alternate linkage. Ser37 bears the Phosphoserine mark. A Q motif motif is present at residues 44–72; it reads SGFRDFLLKPELLRAIVDCGFEHPSEVQH. The 174-residue stretch at 75–248 folds into the Helicase ATP-binding domain; the sequence is IPQAILGMDV…RKFMQDPMEV (174 aa). Position 88–95 (88–95) interacts with ATP; that stretch reads AKSGMGKT. Residues Lys154 and Lys162 each participate in a glycyl lysine isopeptide (Lys-Gly) (interchain with G-Cter in SUMO2) cross-link. Phosphothreonine is present on Thr171. The DECD box motif lies at 195-198; sequence DECD. Residues Lys240 and Lys255 each participate in a glycyl lysine isopeptide (Lys-Gly) (interchain with G-Cter in SUMO2) cross-link. One can recognise a Helicase C-terminal domain in the interval 260-421; it reads GLQQYYVKLK…ELPEEIDIST (162 aa). Position 426 is a phosphoserine (Ser426).

This sequence belongs to the DEAD box helicase family. DECD subfamily. Binds ALYREF/THOC4 and DDX39B/BAT1. Interacts with the apo-AREX complex component SARNP. Interacts with MX1. Interacts with MCM3AP isoform GANP. Interacts with ECD. Interacts with PHAX; this interaction stimulates PHAX RNA binding activity. SUMOylated by RANBP2; SUMOylation modification affects its ability to bind RNA.

The protein localises to the nucleus. It is found in the cytoplasm. The catalysed reaction is ATP + H2O = ADP + phosphate + H(+). In terms of biological role, helicase that plays an essential role in mRNA export and is involved in multiple steps in RNA metabolism including alternative splicing. Regulates nuclear mRNA export to the cytoplasm through association with ECD. Also involved in spliceosomal uridine-rich small nuclear RNA (U snRNA) export by stimulating the RNA binding of adapter PHAX. Plays a role in the negative regulation of type I IFN production by increasing the nuclear retention of antiviral transcripts and thus reducing their protein expression. Independently of the interferon pathway, plays an antiviral role against alphaviruses by binding to a 5' conserved sequence element in the viral genomic RNA. In Rattus norvegicus (Rat), this protein is ATP-dependent RNA helicase DDX39A (Ddx39a).